Consider the following 141-residue polypeptide: ATP synthase epsilon chain (141 aa).

The protein belongs to the ATPase epsilon chain family. In terms of assembly, F-type ATPases have 2 components, CF(1) - the catalytic core - and CF(0) - the membrane proton channel. CF(1) has five subunits: alpha(3), beta(3), gamma(1), delta(1), epsilon(1). CF(0) has three main subunits: a, b and c.

It localises to the cell inner membrane. Produces ATP from ADP in the presence of a proton gradient across the membrane. In Bordetella petrii (strain ATCC BAA-461 / DSM 12804 / CCUG 43448), this protein is ATP synthase epsilon chain.